The primary structure comprises 639 residues: Chaperone protein DnaK (639 aa).

Phosphothreonine; by autocatalysis is present on threonine 198. A compositionally biased stretch (low complexity) spans 603–618 (AKAQTQGGAQEGAAKQ). The tract at residues 603-639 (AKAQTQGGAQEGAAKQSNATADDVVDAEFEEVKDDKK) is disordered. A compositionally biased stretch (acidic residues) spans 625-639 (DVVDAEFEEVKDDKK).

Belongs to the heat shock protein 70 family.

In terms of biological role, acts as a chaperone. This is Chaperone protein DnaK from Shewanella sp. (strain MR-4).